Reading from the N-terminus, the 457-residue chain is 6-phosphofructo-2-kinase/fructose-2,6-bisphosphatase (457 aa).

Residues 1 to 20 form a disordered region; it reads MEIPPGLETTKRKVAHSDEH. The interval 1-244 is 6-phosphofructo-2-kinase; sequence MEIPPGLETT…VYFLMNIHLL (244 aa). Basic and acidic residues predominate over residues 9-20; it reads TTKRKVAHSDEH. Residue 36–44 coordinates ATP; that stretch reads GLPARGKTY. Beta-D-fructose 6-phosphate is bound by residues R69 and R98. D124 is an active-site residue. Positions 126 and 132 each coordinate beta-D-fructose 6-phosphate. The active site involves C154. 163–168 contributes to the ATP binding site; that stretch reads NVTDVK. Residues K168, R190, and Y194 each contribute to the beta-D-fructose 6-phosphate site. The interval 245 to 457 is fructose-2,6-bisphosphatase; sequence PRSIYLTRHG…QLPLCDSPRD (213 aa). R252 provides a ligand contact to beta-D-fructose 2,6-bisphosphate. H253 acts as the Tele-phosphohistidine intermediate in catalysis. Residues N259 and G265 each coordinate beta-D-fructose 2,6-bisphosphate. E324 serves as the catalytic Proton donor/acceptor. Beta-D-fructose 2,6-bisphosphate contacts are provided by Y335, R349, K353, Y364, Q390, and R394. Residue 346–349 coordinates ATP; sequence ADDR. Residues 390 to 394 and Y426 each bind ATP; that span reads QAVLR.

In the C-terminal section; belongs to the phosphoglycerate mutase family.

It catalyses the reaction beta-D-fructose 2,6-bisphosphate + H2O = beta-D-fructose 6-phosphate + phosphate. The catalysed reaction is beta-D-fructose 6-phosphate + ATP = beta-D-fructose 2,6-bisphosphate + ADP + H(+). Synthesis and degradation of fructose 2,6-bisphosphate. This is 6-phosphofructo-2-kinase/fructose-2,6-bisphosphatase from Caenorhabditis elegans.